Consider the following 387-residue polypeptide: Alkanesulfonate monooxygenase (387 aa).

This sequence belongs to the SsuD family.

It catalyses the reaction an alkanesulfonate + FMNH2 + O2 = an aldehyde + FMN + sulfite + H2O + 2 H(+). In terms of biological role, catalyzes the desulfonation of aliphatic sulfonates. The protein is Alkanesulfonate monooxygenase of Xanthomonas axonopodis pv. citri (strain 306).